Reading from the N-terminus, the 1591-residue chain is GATOR1 complex protein DEPDC5 (1591 aa).

3 disordered regions span residues 427 to 455, 478 to 532, and 695 to 720; these read GKKS…TLPI, LATC…STNI, and LSNS…STSP. Over residues 430–439 the composition is skewed to basic and acidic residues; sequence SASEKTKNGR. Residues 494 to 508 show a composition bias toward low complexity; the sequence is SASSCDVSSSPSLPS. Serine 505 carries the phosphoserine modification. The segment covering 518-532 has biased composition (polar residues); it reads SQASDDSSLGKSTNI. Serine 992 carries the phosphoserine modification. Disordered stretches follow at residues 1040–1064 and 1118–1153; these read SQKS…ENSS and STGQ…SSQQ. Polar residues predominate over residues 1118–1149; sequence STGQPMDRGNNQTFGNSQNIEQAFPSANSGDY. Residues 1175-1250 form the DEP domain; it reads PSTGVQLLSE…YGFYFYKIVM (76 aa). A Phosphoserine modification is found at serine 1518.

This sequence belongs to the IML1 family. Within the GATOR complex, component of the GATOR1 subcomplex, made of DEPDC5, NPRL2 and NPRL3. GATOR1 mediates the strong interaction of the GATOR complex with small GTPases Rag (RagA/RRAGA, RagB/RRAGB, RagC/RRAGC and/or RagD/RRAGD) heterodimers. GATOR1 interacts with GPR155/LYCHOS; interaction takes place in presence of cholesterol and prevents interaction between GATOR1 and KICSTOR. Interacts with SAMTOR; interaction is direct and takes place in presence of methionine, leading to inhibit the activity of the GATOR1 complex. Post-translationally, phosphorylation at Ser-992 and Ser-1518 by AKT1 and PIM1 inhibit the activity of DEPDC5, releasing inhibition of the mTORC1 pathway. Ubiquitinated. Amino acid-induced 'Lys-48'-linked polyubiquitination of DEPDC5 by the BCR(KLHL22) ubiquitin ligase complex leads to DEPDC5 proteasomal degradation and inhibition of the GATOR1 complex. Ubiquitination may occur at multiple lysines. Expressed at low levels in all brain regions. Expressed throughout brain development, including in midgestation embryonic head (11.5 dpc), neonatal brain and whole adult brain. Present in neurons and absent in non-neuronal cells, including astrocytes (at protein level).

The protein resides in the lysosome membrane. The protein localises to the cytoplasm. It is found in the cytosol. Its subcellular location is the perinuclear region. As a component of the GATOR1 complex functions as an inhibitor of the amino acid-sensing branch of the mTORC1 pathway. In response to amino acid depletion, the GATOR1 complex has GTPase activating protein (GAP) activity and strongly increases GTP hydrolysis by RagA/RRAGA (or RagB/RRAGB) within heterodimeric Rag complexes, thereby turning them into their inactive GDP-bound form, releasing mTORC1 from lysosomal surface and inhibiting mTORC1 signaling. In the presence of abundant amino acids, the GATOR1 complex is negatively regulated by GATOR2, the other GATOR subcomplex, in this amino acid-sensing branch of the TORC1 pathway. Within the GATOR1 complex, DEPDC5 mediates direct interaction with the nucleotide-binding pocket of small GTPases Rag (RagA/RRAGA, RagB/RRAGB, RagC/RRAGC and/or RagD/RRAGD) and coordinates their nucleotide loading states by promoting RagA/RRAGA or RagB/RRAGB into their GDP-binding state and RagC/RRAGC or RagD/RRAGD into their GTP-binding state. However, it does not execute the GAP activity, which is mediated by NPRL2. The protein is GATOR1 complex protein DEPDC5 of Mus musculus (Mouse).